Here is a 375-residue protein sequence, read N- to C-terminus: Probable pectin lyase B (375 aa).

The first 19 residues, 1-19, serve as a signal peptide directing secretion; that stretch reads MKYAAFLPTIGALVSQAIA. Cystine bridges form between Cys-82-Cys-101 and Cys-91-Cys-225. N-linked (GlcNAc...) asparagine glycosylation occurs at Asn-128. Arg-255 is a catalytic residue. A disulfide bond links Cys-321 and Cys-329.

It belongs to the polysaccharide lyase 1 family.

It localises to the secreted. It catalyses the reaction Eliminative cleavage of (1-&gt;4)-alpha-D-galacturonan methyl ester to give oligosaccharides with 4-deoxy-6-O-methyl-alpha-D-galact-4-enuronosyl groups at their non-reducing ends.. Pectinolytic enzymes consist of four classes of enzymes: pectin lyase, polygalacturonase, pectin methylesterase and rhamnogalacturonase. Among pectinolytic enzymes, pectin lyase is the most important in depolymerization of pectin, since it cleaves internal glycosidic bonds of highly methylated pectins. In Aspergillus fumigatus (strain CBS 144.89 / FGSC A1163 / CEA10) (Neosartorya fumigata), this protein is Probable pectin lyase B (pelB).